A 617-amino-acid chain; its full sequence is MAEAKTHWLGAALSLIPLIFLISGAEAASFQRNQLLQKEPDLRLENVQKFPSPEMIRALEYIEKLRQQAHKEESSPDYNPYQGVSIPLQQKENGDESHLPERDSLSEEDWMRIILEALRQVENEPQSVPKENKPHALNSEKNFPIDMSDDYETQQWPERKLKHMQFPPMYEENSRDNPFKRTNEIVEEQYTPQSLATLESVFQELGKLTGPNNQKRERMDEEQKLYTDDEDDIYKANNIAYEDVVGGEDWNPVEEKIESQTQEEVRDSKENTEKNEQINDEVKRSGQLGIQEEDLRKESKDQLSDDVSKVITYLKRLVNAAGSGRLQNGQNGERATRLFEKPLDSQSIYQLIEISRNLQIPPEDLIEMLKTGEKPNGSVEPERELDLPVDLDDISEADLDHPDLFQNKMLSKSGYPKTVGRAGTEALPDGLSVEDILNLLGMESAANQKTSYFPNPYNQEKVLPRLPYGPGRSRSNQLPKAAWMPYVENRQMAYENLNDKDQELGEYLARMLVKYPEIINSNQVKRVPGQGSPEDDLQEEEQIEQAIKEHLNQGSSQETDKLAPVSKRFPVGPPKNDDTPNRQYLDEDLLTKVLEYLNQEKAEKGREHIAKRAMENM.

The first 27 residues, 1 to 27 (MAEAKTHWLGAALSLIPLIFLISGAEA), serve as a signal peptide directing secretion. Residues 28–30 (ASF) constitute a propeptide that is removed on maturation. Residues 123 to 147 (NEPQSVPKENKPHALNSEKNFPIDM) form a disordered region. Tyrosine 151 is subject to Sulfotyrosine. Serine 174, serine 268, serine 432, serine 532, serine 555, and serine 556 each carry phosphoserine. Positions 552-583 (NQGSSQETDKLAPVSKRFPVGPPKNDDTPNRQ) are disordered.

It belongs to the chromogranin/secretogranin protein family. As to quaternary structure, interacts with Secretogranin III/SCG3.

It is found in the secreted. Its function is as follows. Neuroendocrine protein of the granin family that regulates the biogenesis of secretory granules. This is Secretogranin-2 (SCG2) from Macaca fascicularis (Crab-eating macaque).